The following is a 393-amino-acid chain: Beta-1,4-galactosyltransferase 3 (393 aa).

The Cytoplasmic segment spans residues 1 to 10 (MLRRLLERPC). A helical; Signal-anchor for type II membrane protein transmembrane segment spans residues 11-31 (TLALLVGSQLAVMMYLSLGGF). At 32–393 (RSLSALFGRD…ANHTALRGSH (362 aa)) the chain is on the lumenal side. A glycan (N-linked (GlcNAc...) asparagine) is linked at N57. Cysteines 77 and 119 form a disulfide. 130–134 (PHRAR) is a binding site for UDP-alpha-D-galactose. N-linked (GlcNAc...) asparagine glycosylation occurs at N166. UDP-alpha-D-galactose is bound by residues 169–171 (FNR), 196–197 (VD), Y226, and W258. A disulfide bridge connects residues C190 and C209. D197 lines the Mn(2+) pocket. 260–263 (GEDD) is an N-acetyl-D-glucosamine binding site. Position 291 (H291) interacts with Mn(2+). 291 to 293 (HRG) is a binding site for UDP-alpha-D-galactose. R303 contributes to the N-acetyl-D-glucosamine binding site. 2 N-linked (GlcNAc...) asparagine glycosylation sites follow: N337 and N385. Residues 339–393 (TADIGTDPRGPRAPSGPRYPPGSSQAFRQEMLQRRPPARPGPLSTANHTALRGSH) are disordered.

This sequence belongs to the glycosyltransferase 7 family. Mn(2+) serves as cofactor. In terms of tissue distribution, found in various tissues. Highest expression in placenta, prostate, testis, ovary, intestine and muscle, and in fetal brain.

It localises to the golgi apparatus. The protein resides in the golgi stack membrane. The enzyme catalyses an N-acetyl-beta-D-glucosaminyl derivative + UDP-alpha-D-galactose = a beta-D-galactosyl-(1-&gt;4)-N-acetyl-beta-D-glucosaminyl derivative + UDP + H(+). The catalysed reaction is N-acetyl-D-glucosamine + UDP-alpha-D-galactose = beta-D-galactosyl-(1-&gt;4)-N-acetyl-D-glucosamine + UDP + H(+). It catalyses the reaction a beta-D-GlcNAc-(1-&gt;3)-beta-D-Gal-(1-&gt;4)-beta-D-Glc-(1&lt;-&gt;1)-Cer(d18:1(4E)) + UDP-alpha-D-galactose = a neolactoside nLc4Cer(d18:1(4E)) + UDP + H(+). It carries out the reaction a beta-D-glucosylceramide + UDP-alpha-D-galactose = a beta-D-galactosyl-(1-&gt;4)-beta-D-glucosyl-(1&lt;-&gt;1)-ceramide + UDP + H(+). The enzyme catalyses a neolactoside IV(3)-beta-GlcNAc-nLc4Cer + UDP-alpha-D-galactose = a neolactoside nLc6Cer + UDP + H(+). It participates in protein modification; protein glycosylation. Functionally, responsible for the synthesis of complex-type N-linked oligosaccharides in many glycoproteins as well as the carbohydrate moieties of glycolipids. The protein is Beta-1,4-galactosyltransferase 3 of Homo sapiens (Human).